Consider the following 318-residue polypeptide: Methenyltetrahydromethanopterin cyclohydrolase (318 aa).

It belongs to the MCH family.

The protein localises to the cytoplasm. The catalysed reaction is 5,10-methenyl-5,6,7,8-tetrahydromethanopterin + H2O = N(5)-formyl-5,6,7,8-tetrahydromethanopterin + H(+). It participates in one-carbon metabolism; methanogenesis from CO(2); 5,10-methenyl-5,6,7,8-tetrahydromethanopterin from CO(2): step 3/3. Catalyzes the reversible interconversion of 5-formyl-H(4)MPT to methenyl-H(4)MPT(+). This chain is Methenyltetrahydromethanopterin cyclohydrolase, found in Methanocella arvoryzae (strain DSM 22066 / NBRC 105507 / MRE50).